The following is a 226-amino-acid chain: Ribosomal RNA small subunit methyltransferase G (226 aa).

S-adenosyl-L-methionine contacts are provided by residues Gly-83, Phe-88, 136 to 137 (IE), and Arg-152. Residues 199 to 226 (FSPSQSDPEGSVLKVRGLHGPDGQPHRR) form a disordered region.

The protein belongs to the methyltransferase superfamily. RNA methyltransferase RsmG family.

The protein localises to the cytoplasm. It carries out the reaction guanosine(527) in 16S rRNA + S-adenosyl-L-methionine = N(7)-methylguanosine(527) in 16S rRNA + S-adenosyl-L-homocysteine. Specifically methylates the N7 position of guanine in position 527 of 16S rRNA. This Parvibaculum lavamentivorans (strain DS-1 / DSM 13023 / NCIMB 13966) protein is Ribosomal RNA small subunit methyltransferase G.